Consider the following 109-residue polypeptide: Hainantoxin-XVIII-4 (109 aa).

The first 18 residues, 1-18 (MKLSIIIIATSLVIAVVA), serve as a signal peptide directing secretion. Positions 19–46 (FPSKDSKAIENDKTEQRMEIVVQETARA) are excised as a propeptide. Intrachain disulfides connect cysteine 55/cysteine 68, cysteine 59/cysteine 108, and cysteine 61/cysteine 81.

Belongs to the neurotoxin 25 family. F7 subfamily. As to expression, expressed by the venom gland.

It is found in the secreted. Putative ion channel inhibitor. The sequence is that of Hainantoxin-XVIII-4 from Cyriopagopus hainanus (Chinese bird spider).